The following is a 58-amino-acid chain: Parvalbumin beta 3 (58 aa).

Alanine 1 is subject to N-acetylalanine. The 35-residue stretch at phenylalanine 24 to lysine 58 folds into the EF-hand domain. Ca(2+)-binding residues include aspartate 37, aspartate 39, serine 41, phenylalanine 43, glutamate 45, and glutamate 48.

It belongs to the parvalbumin family.

Its function is as follows. In muscle, parvalbumin is thought to be involved in relaxation after contraction. It binds two calcium ions. This is Parvalbumin beta 3 from Merluccius senegalensis (Senegalese hake).